A 65-amino-acid polypeptide reads, in one-letter code: Large ribosomal subunit protein bL35 (65 aa).

The protein belongs to the bacterial ribosomal protein bL35 family.

In Aeromonas salmonicida (strain A449), this protein is Large ribosomal subunit protein bL35.